A 306-amino-acid chain; its full sequence is Lipid A biosynthesis lauroyltransferase (306 aa).

Residues 17-37 (WLTWLGIGVLWLVVQLPYPVI) traverse the membrane as a helical segment. The HXXXXD motif motif lies at 132-137 (HFLTLE).

The protein belongs to the LpxL/LpxM/LpxP family. In terms of assembly, monomer.

The protein localises to the cell inner membrane. The catalysed reaction is dodecanoyl-[ACP] + alpha-Kdo-(2-&gt;4)-alpha-Kdo-(2-&gt;6)-lipid IVA (E. coli) = alpha-Kdo-(2-&gt;4)-alpha-Kdo-(2-&gt;6)-(dodecanoyl)-lipid IVA (E. coli) + holo-[ACP]. It functions in the pathway glycolipid biosynthesis; KDO(2)-lipid A biosynthesis; KDO(2)-lipid A from CMP-3-deoxy-D-manno-octulosonate and lipid IV(A): step 3/4. It participates in bacterial outer membrane biogenesis; lipopolysaccharide biosynthesis. Functionally, catalyzes the transfer of laurate from lauroyl-[acyl-carrier-protein] (ACP) to Kdo(2)-lipid IV(A) to form Kdo(2)-(lauroyl)-lipid IV(A). Has 10 fold selectivity for lauroyl-ACP over myristoyl-ACP. In vitro, can also catalyze a slow second acylation reaction leading to the formation of Kdo(2)-(dilauroyl)-lipid IV(A). In Escherichia coli (strain K12), this protein is Lipid A biosynthesis lauroyltransferase.